Here is a 243-residue protein sequence, read N- to C-terminus: Protein-L-isoaspartate O-methyltransferase (243 aa).

Ser-87 is a catalytic residue.

The protein belongs to the methyltransferase superfamily. L-isoaspartyl/D-aspartyl protein methyltransferase family.

It is found in the cytoplasm. The enzyme catalyses [protein]-L-isoaspartate + S-adenosyl-L-methionine = [protein]-L-isoaspartate alpha-methyl ester + S-adenosyl-L-homocysteine. Catalyzes the methyl esterification of L-isoaspartyl residues in peptides and proteins that result from spontaneous decomposition of normal L-aspartyl and L-asparaginyl residues. It plays a role in the repair and/or degradation of damaged proteins. This chain is Protein-L-isoaspartate O-methyltransferase, found in Methanosarcina mazei (strain ATCC BAA-159 / DSM 3647 / Goe1 / Go1 / JCM 11833 / OCM 88) (Methanosarcina frisia).